A 76-amino-acid polypeptide reads, in one-letter code: MSIEERVKKIIVEQLGVKEEEVKSESSFIEDLGADSLDTVELVMALEEEFDIEIPDEEAEKITTVQSAIDYVQNNQ.

Residues 1–76 (MSIEERVKKI…SAIDYVQNNQ (76 aa)) form the Carrier domain. Position 36 is an O-(pantetheine 4'-phosphoryl)serine (Ser36).

It belongs to the acyl carrier protein (ACP) family. Post-translationally, 4'-phosphopantetheine is transferred from CoA to a specific serine of apo-ACP by AcpS. This modification is essential for activity because fatty acids are bound in thioester linkage to the sulfhydryl of the prosthetic group.

The protein resides in the cytoplasm. It functions in the pathway lipid metabolism; fatty acid biosynthesis. Its function is as follows. Carrier of the growing fatty acid chain in fatty acid biosynthesis. The protein is Acyl carrier protein of Actinobacillus succinogenes (strain ATCC 55618 / DSM 22257 / CCUG 43843 / 130Z).